A 235-amino-acid chain; its full sequence is Nuclear egress protein 2 (235 aa).

The Perinuclear space portion of the chain corresponds to 1–214; the sequence is MNSTRLVYEL…IKPWTLSKKN (214 aa). The helical transmembrane segment at 215–232 threads the bilayer; it reads IWTIILSLVAVVAIILKW. Topologically, residues 233–235 are nuclear; the sequence is REL.

This sequence belongs to the herpesviridae NEC2 protein family. Forms a heterohexameric complex with NEC1. Phosphorylated.

It is found in the host nucleus inner membrane. Functionally, plays an essential role in virion nuclear egress, the first step of virion release from infected cell. Within the host nucleus, NEC1 interacts with the newly formed capsid through the vertexes and directs it to the inner nuclear membrane by associating with NEC2. Induces the budding of the capsid at the inner nuclear membrane as well as its envelopment into the perinuclear space. There, the NEC1/NEC2 complex promotes the fusion of the enveloped capsid with the outer nuclear membrane and the subsequent release of the viral capsid into the cytoplasm where it will reach the secondary budding sites in the host Golgi or trans-Golgi network. This is Nuclear egress protein 2 from Saimiri sciureus (Common squirrel monkey).